A 96-amino-acid chain; its full sequence is UPF0235 protein Sputw3181_1321 (96 aa).

This sequence belongs to the UPF0235 family.

The sequence is that of UPF0235 protein Sputw3181_1321 from Shewanella sp. (strain W3-18-1).